We begin with the raw amino-acid sequence, 188 residues long: Elongation factor P (188 aa).

Belongs to the elongation factor P family.

The protein localises to the cytoplasm. Its pathway is protein biosynthesis; polypeptide chain elongation. In terms of biological role, involved in peptide bond synthesis. Stimulates efficient translation and peptide-bond synthesis on native or reconstituted 70S ribosomes in vitro. Probably functions indirectly by altering the affinity of the ribosome for aminoacyl-tRNA, thus increasing their reactivity as acceptors for peptidyl transferase. This Saccharopolyspora erythraea (strain ATCC 11635 / DSM 40517 / JCM 4748 / NBRC 13426 / NCIMB 8594 / NRRL 2338) protein is Elongation factor P.